Reading from the N-terminus, the 467-residue chain is Glycine--tRNA ligase (467 aa).

Residues Arg100 and Glu175 each contribute to the substrate site. Residues 207–209, 217–222, 291–292, and 335–338 contribute to the ATP site; these read RNE, FRTREF, EL, and GADR. A substrate-binding site is contributed by 222 to 226; that stretch reads FEQME. Residue 331-335 participates in substrate binding; that stretch reads EPSLG.

This sequence belongs to the class-II aminoacyl-tRNA synthetase family. Homodimer.

It localises to the cytoplasm. It carries out the reaction tRNA(Gly) + glycine + ATP = glycyl-tRNA(Gly) + AMP + diphosphate. Its function is as follows. Catalyzes the attachment of glycine to tRNA(Gly). The sequence is that of Glycine--tRNA ligase from Clostridium perfringens (strain 13 / Type A).